A 564-amino-acid polypeptide reads, in one-letter code: Adenine deaminase (564 aa).

This sequence belongs to the metallo-dependent hydrolases superfamily. Adenine deaminase family. It depends on Mn(2+) as a cofactor.

It carries out the reaction adenine + H2O + H(+) = hypoxanthine + NH4(+). The sequence is that of Adenine deaminase from Deinococcus geothermalis (strain DSM 11300 / CIP 105573 / AG-3a).